The primary structure comprises 117 residues: NADH-ubiquinone oxidoreductase chain 3 (117 aa).

3 consecutive transmembrane segments (helical) span residues 1 to 21 (MKFI…LLLL), 58 to 78 (FLMT…LPII), and 86 to 106 (TMIS…TLIL).

Belongs to the complex I subunit 3 family.

The protein resides in the mitochondrion membrane. The enzyme catalyses a ubiquinone + NADH + 5 H(+)(in) = a ubiquinol + NAD(+) + 4 H(+)(out). Core subunit of the mitochondrial membrane respiratory chain NADH dehydrogenase (Complex I) that is believed to belong to the minimal assembly required for catalysis. Complex I functions in the transfer of electrons from NADH to the respiratory chain. The immediate electron acceptor for the enzyme is believed to be ubiquinone. The chain is NADH-ubiquinone oxidoreductase chain 3 (ND3) from Apis mellifera ligustica (Common honeybee).